The following is a 397-amino-acid chain: Tryptophan synthase beta chain (397 aa).

K91 carries the post-translational modification N6-(pyridoxal phosphate)lysine.

Belongs to the TrpB family. In terms of assembly, tetramer of two alpha and two beta chains. Requires pyridoxal 5'-phosphate as cofactor.

It carries out the reaction (1S,2R)-1-C-(indol-3-yl)glycerol 3-phosphate + L-serine = D-glyceraldehyde 3-phosphate + L-tryptophan + H2O. It functions in the pathway amino-acid biosynthesis; L-tryptophan biosynthesis; L-tryptophan from chorismate: step 5/5. Functionally, the beta subunit is responsible for the synthesis of L-tryptophan from indole and L-serine. In Bacillus cereus (strain Q1), this protein is Tryptophan synthase beta chain.